The following is a 215-amino-acid chain: Cytochrome c biogenesis ATP-binding export protein CcmA (215 aa).

The region spanning 12 to 215 (LAAHALTYSR…TRLLHLQKAP (204 aa)) is the ABC transporter domain. 44–51 (GPNGIGKT) contributes to the ATP binding site.

It belongs to the ABC transporter superfamily. CcmA exporter (TC 3.A.1.107) family. In terms of assembly, the complex is composed of two ATP-binding proteins (CcmA) and two transmembrane proteins (CcmB).

The protein localises to the cell inner membrane. It catalyses the reaction heme b(in) + ATP + H2O = heme b(out) + ADP + phosphate + H(+). In terms of biological role, part of the ABC transporter complex CcmAB involved in the biogenesis of c-type cytochromes; once thought to export heme, this seems not to be the case, but its exact role is uncertain. Responsible for energy coupling to the transport system. The polypeptide is Cytochrome c biogenesis ATP-binding export protein CcmA (Xylella fastidiosa (strain Temecula1 / ATCC 700964)).